The primary structure comprises 287 residues: ATP synthase gamma chain (287 aa).

It belongs to the ATPase gamma chain family. As to quaternary structure, F-type ATPases have 2 components, CF(1) - the catalytic core - and CF(0) - the membrane proton channel. CF(1) has five subunits: alpha(3), beta(3), gamma(1), delta(1), epsilon(1). CF(0) has three main subunits: a, b and c.

It is found in the cell inner membrane. Functionally, produces ATP from ADP in the presence of a proton gradient across the membrane. The gamma chain is believed to be important in regulating ATPase activity and the flow of protons through the CF(0) complex. In Colwellia maris, this protein is ATP synthase gamma chain.